Here is a 276-residue protein sequence, read N- to C-terminus: MAD2L1-binding protein (276 aa).

Over residues 1-10 (MAASGEEDMS) the composition is skewed to acidic residues. Residues 1-30 (MAASGEEDMSELSPAAAPNLDWYEKPEETH) form a disordered region. The interaction with MAD2L1 stretch occupies residues 49–81 (PAEPFCPRDLVPVVFPGPVSQEDCCQFTCELLK).

Belongs to the MAD2L1BP family. As to quaternary structure, interacts with MAD2L1.

It localises to the nucleus. The protein resides in the nucleoplasm. Its subcellular location is the cytoplasm. The protein localises to the cytoskeleton. It is found in the spindle. May function to silence the spindle checkpoint and allow mitosis to proceed through anaphase by binding MAD2L1 after it has become dissociated from the MAD2L1-CDC20 complex. This chain is MAD2L1-binding protein (Mad2l1bp), found in Mus musculus (Mouse).